The following is a 459-amino-acid chain: tRNA modification GTPase MnmE (459 aa).

(6S)-5-formyl-5,6,7,8-tetrahydrofolate-binding residues include Arg-22, Glu-85, and Arg-124. Residues 221–380 (GLSTVIVGKP…LEIQIRDLFF (160 aa)) enclose the TrmE-type G domain. K(+) is bound at residue Asn-231. GTP-binding positions include 231–236 (NVGKSS), 250–256 (TEVAGTT), and 275–278 (DTAG). Ser-235 contacts Mg(2+). Residues Thr-250, Val-252, and Thr-255 each contribute to the K(+) site. Thr-256 lines the Mg(2+) pocket. Position 459 (Lys-459) interacts with (6S)-5-formyl-5,6,7,8-tetrahydrofolate.

Belongs to the TRAFAC class TrmE-Era-EngA-EngB-Septin-like GTPase superfamily. TrmE GTPase family. In terms of assembly, homodimer. Heterotetramer of two MnmE and two MnmG subunits. The cofactor is K(+).

Its subcellular location is the cytoplasm. Its function is as follows. Exhibits a very high intrinsic GTPase hydrolysis rate. Involved in the addition of a carboxymethylaminomethyl (cmnm) group at the wobble position (U34) of certain tRNAs, forming tRNA-cmnm(5)s(2)U34. This chain is tRNA modification GTPase MnmE, found in Staphylococcus aureus (strain bovine RF122 / ET3-1).